Here is a 426-residue protein sequence, read N- to C-terminus: Serine--tRNA ligase (426 aa).

An L-serine-binding site is contributed by 231 to 233 (TAE). 262–264 (RSE) lines the ATP pocket. E285 contributes to the L-serine binding site. Residue 349–352 (EISS) participates in ATP binding. S385 provides a ligand contact to L-serine.

It belongs to the class-II aminoacyl-tRNA synthetase family. Type-1 seryl-tRNA synthetase subfamily. As to quaternary structure, homodimer. The tRNA molecule binds across the dimer.

The protein localises to the cytoplasm. It catalyses the reaction tRNA(Ser) + L-serine + ATP = L-seryl-tRNA(Ser) + AMP + diphosphate + H(+). The enzyme catalyses tRNA(Sec) + L-serine + ATP = L-seryl-tRNA(Sec) + AMP + diphosphate + H(+). Its pathway is aminoacyl-tRNA biosynthesis; selenocysteinyl-tRNA(Sec) biosynthesis; L-seryl-tRNA(Sec) from L-serine and tRNA(Sec): step 1/1. In terms of biological role, catalyzes the attachment of serine to tRNA(Ser). Is also able to aminoacylate tRNA(Sec) with serine, to form the misacylated tRNA L-seryl-tRNA(Sec), which will be further converted into selenocysteinyl-tRNA(Sec). In Teredinibacter turnerae (strain ATCC 39867 / T7901), this protein is Serine--tRNA ligase.